Reading from the N-terminus, the 490-residue chain is Betaine aldehyde dehydrogenase (490 aa).

Positions 26, 27, and 93 each coordinate K(+). Position 150–152 (150–152) interacts with NAD(+); the sequence is GAW. K162 (charge relay system) is an active-site residue. 176 to 179 lines the NAD(+) pocket; sequence KPSE. A K(+)-binding site is contributed by V180. 230 to 233 lines the NAD(+) pocket; sequence GVAT. A K(+)-binding site is contributed by L246. The active-site Proton acceptor is E252. NAD(+) contacts are provided by G254, C286, and E387. The active-site Nucleophile is C286. A Cysteine sulfenic acid (-SOH) modification is found at C286. 2 residues coordinate K(+): K457 and G460. The Charge relay system role is filled by E464.

It belongs to the aldehyde dehydrogenase family. In terms of assembly, dimer of dimers. It depends on K(+) as a cofactor.

It catalyses the reaction betaine aldehyde + NAD(+) + H2O = glycine betaine + NADH + 2 H(+). It participates in amine and polyamine biosynthesis; betaine biosynthesis via choline pathway; betaine from betaine aldehyde: step 1/1. In terms of biological role, involved in the biosynthesis of the osmoprotectant glycine betaine. Catalyzes the irreversible oxidation of betaine aldehyde to the corresponding acid. In Stutzerimonas stutzeri (strain A1501) (Pseudomonas stutzeri), this protein is Betaine aldehyde dehydrogenase.